Consider the following 250-residue polypeptide: 3-deoxy-manno-octulosonate cytidylyltransferase (250 aa).

Belongs to the KdsB family.

It localises to the cytoplasm. It carries out the reaction 3-deoxy-alpha-D-manno-oct-2-ulosonate + CTP = CMP-3-deoxy-beta-D-manno-octulosonate + diphosphate. It participates in nucleotide-sugar biosynthesis; CMP-3-deoxy-D-manno-octulosonate biosynthesis; CMP-3-deoxy-D-manno-octulosonate from 3-deoxy-D-manno-octulosonate and CTP: step 1/1. It functions in the pathway bacterial outer membrane biogenesis; lipopolysaccharide biosynthesis. In terms of biological role, activates KDO (a required 8-carbon sugar) for incorporation into bacterial lipopolysaccharide in Gram-negative bacteria. This Pectobacterium atrosepticum (strain SCRI 1043 / ATCC BAA-672) (Erwinia carotovora subsp. atroseptica) protein is 3-deoxy-manno-octulosonate cytidylyltransferase.